The primary structure comprises 577 residues: Proline--tRNA ligase (577 aa).

It belongs to the class-II aminoacyl-tRNA synthetase family. ProS type 1 subfamily. As to quaternary structure, homodimer.

It localises to the cytoplasm. It carries out the reaction tRNA(Pro) + L-proline + ATP = L-prolyl-tRNA(Pro) + AMP + diphosphate. Functionally, catalyzes the attachment of proline to tRNA(Pro) in a two-step reaction: proline is first activated by ATP to form Pro-AMP and then transferred to the acceptor end of tRNA(Pro). As ProRS can inadvertently accommodate and process non-cognate amino acids such as alanine and cysteine, to avoid such errors it has two additional distinct editing activities against alanine. One activity is designated as 'pretransfer' editing and involves the tRNA(Pro)-independent hydrolysis of activated Ala-AMP. The other activity is designated 'posttransfer' editing and involves deacylation of mischarged Ala-tRNA(Pro). The misacylated Cys-tRNA(Pro) is not edited by ProRS. The chain is Proline--tRNA ligase from Thermotoga sp. (strain RQ2).